The following is a 379-amino-acid chain: UDP-4-amino-4-deoxy-L-arabinose--oxoglutarate aminotransferase (379 aa).

Lysine 183 carries the N6-(pyridoxal phosphate)lysine modification.

Belongs to the DegT/DnrJ/EryC1 family. ArnB subfamily. In terms of assembly, homodimer. Pyridoxal 5'-phosphate is required as a cofactor.

The catalysed reaction is UDP-4-amino-4-deoxy-beta-L-arabinose + 2-oxoglutarate = UDP-beta-L-threo-pentopyranos-4-ulose + L-glutamate. It participates in nucleotide-sugar biosynthesis; UDP-4-deoxy-4-formamido-beta-L-arabinose biosynthesis; UDP-4-deoxy-4-formamido-beta-L-arabinose from UDP-alpha-D-glucuronate: step 2/3. Its pathway is bacterial outer membrane biogenesis; lipopolysaccharide biosynthesis. Catalyzes the conversion of UDP-4-keto-arabinose (UDP-Ara4O) to UDP-4-amino-4-deoxy-L-arabinose (UDP-L-Ara4N). The modified arabinose is attached to lipid A and is required for resistance to polymyxin and cationic antimicrobial peptides. The sequence is that of UDP-4-amino-4-deoxy-L-arabinose--oxoglutarate aminotransferase from Pseudomonas fluorescens (strain ATCC BAA-477 / NRRL B-23932 / Pf-5).